Here is a 655-residue protein sequence, read N- to C-terminus: ATP-dependent RNA helicase mss116, mitochondrial (655 aa).

The N-terminal 56 residues, 1–56, are a transit peptide targeting the mitochondrion; it reads MMLGAVRRYGVVHALRASVPRTICRPSNSQLLRCQTSPVTACPQSVRLLHKSSPFF. The Q motif signature appears at 84-113; that stretch reads DLAERGLVDPKIIRAIVKDMNIKTMTDVQS. Residues 116–307 enclose the Helicase ATP-binding domain; the sequence is LREILQGDDV…RKTMKPNFKF (192 aa). 129–136 is a binding site for ATP; it reads AKTGTGKT. Residues 251–254 carry the DEAD box motif; that stretch reads DEAD. The Helicase C-terminal domain maps to 341–503; it reads EFVTKYVEGE…TFATATVDMT (163 aa). The interval 594–642 is disordered; sequence YRGSSDNMSTRPDYRGGDRDMWASNSRRGREFNSDRRESRFGNHRNADD. Composition is skewed to basic and acidic residues over residues 605–614 and 621–642; these read PDYRGGDRDM and RGRE…NADD.

It belongs to the DEAD box helicase family. DDX18/HAS1 subfamily.

Its subcellular location is the mitochondrion matrix. The enzyme catalyses ATP + H2O = ADP + phosphate + H(+). Functionally, ATP-dependent RNA helicase required for mitochondrial splicing of group I and II introns. Also required for efficient mitochondrial translation. This chain is ATP-dependent RNA helicase mss116, mitochondrial (mss116), found in Aspergillus fumigatus (strain ATCC MYA-4609 / CBS 101355 / FGSC A1100 / Af293) (Neosartorya fumigata).